A 1058-amino-acid chain; its full sequence is SMC5-SMC6 complex localization factor protein 1 (1058 aa).

2 BRCT domains span residues M12–A77 and G119–L196. Positions P410–S1058 are NSE5-like domain; mediates interaction with SLF2. ANK repeat units follow at residues K806–V836, A840–L869, and D874–L903. A Glycyl lysine isopeptide (Lys-Gly) (interchain with G-Cter in SUMO2) cross-link involves residue K931.

Interacts (via N-terminus) with SLF2; this interaction links RAD18 to the SMC5-SMC6 complex. Interacts (via BRCT domains) with RAD18; this interaction occurs in a SLF2-independent manner. Interacts with SMC6. Interacts (via BRCT domains) with RAD18 (via C-terminus and phosphorylated form); this interaction is required for efficient repair of UV-induced DNA damage.

Its subcellular location is the nucleus. It localises to the cytoplasm. The protein resides in the cytoskeleton. The protein localises to the microtubule organizing center. It is found in the centrosome. In terms of biological role, plays a role in the DNA damage response (DDR) pathway by regulating postreplication repair of UV-damaged DNA and genomic stability maintenance. The SLF1-SLF2 complex acts to link RAD18 with the SMC5-SMC6 complex at replication-coupled interstrand cross-links (ICL) and DNA double-strand breaks (DSBs) sites on chromatin during DNA repair in response to stalled replication forks. Promotes the recruitment of SLF2 and the SMC5-SMC6 complex to DNA lesions. This is SMC5-SMC6 complex localization factor protein 1 from Homo sapiens (Human).